Consider the following 320-residue polypeptide: Beta-ketoacyl-[acyl-carrier-protein] synthase III (320 aa).

Residues cysteine 114 and histidine 247 contribute to the active site. The tract at residues 248–252 (QANRR) is ACP-binding. Residue asparagine 277 is part of the active site.

This sequence belongs to the thiolase-like superfamily. FabH family. As to quaternary structure, homodimer.

Its subcellular location is the cytoplasm. The enzyme catalyses malonyl-[ACP] + acetyl-CoA + H(+) = 3-oxobutanoyl-[ACP] + CO2 + CoA. It participates in lipid metabolism; fatty acid biosynthesis. Functionally, catalyzes the condensation reaction of fatty acid synthesis by the addition to an acyl acceptor of two carbons from malonyl-ACP. Catalyzes the first condensation reaction which initiates fatty acid synthesis and may therefore play a role in governing the total rate of fatty acid production. Possesses both acetoacetyl-ACP synthase and acetyl transacylase activities. Its substrate specificity determines the biosynthesis of branched-chain and/or straight-chain of fatty acids. The protein is Beta-ketoacyl-[acyl-carrier-protein] synthase III of Neisseria meningitidis serogroup B (strain ATCC BAA-335 / MC58).